A 149-amino-acid chain; its full sequence is Heat shock protein beta-3 (149 aa).

One can recognise a sHSP domain in the interval 47–149 (KARAAQAPPV…VEVKDSAGTK (103 aa)).

It belongs to the small heat shock protein (HSP20) family.

The protein resides in the cytoplasm. The protein localises to the nucleus. Its function is as follows. Inhibitor of actin polymerization. The polypeptide is Heat shock protein beta-3 (HSPB3) (Bos taurus (Bovine)).